The primary structure comprises 50 residues: Acidic phospholipase A2 1 (50 aa).

Residues Tyr27, Gly29, and Gly31 each contribute to the Ca(2+) site. The cysteines at positions 28 and 44 are disulfide-linked. His47 is a catalytic residue. Residue Asp48 coordinates Ca(2+).

Belongs to the phospholipase A2 family. Group II subfamily. D49 sub-subfamily. In terms of assembly, monomer. Ca(2+) is required as a cofactor. Expressed by the venom gland.

The protein resides in the secreted. It carries out the reaction a 1,2-diacyl-sn-glycero-3-phosphocholine + H2O = a 1-acyl-sn-glycero-3-phosphocholine + a fatty acid + H(+). Snake venom phospholipase A2 (PLA2) that displays a potent enzymatic activity as measured by indirect hemolysis of red blood cells. Is neither lethal when injected into mice nor does it present anticoagulant activity. Displays a moderate inhibitory activity on the aggregation of platelets induced by low levels of ADP, thrombin and arachidonate. In contrast, strongly inhibits platelet aggregation induced by high doses of collagen. Shows myotoxic activity, increases the plasma creatine-kinase activity and induces edema and myonecrosis of mouse skeletal muscles. PLA2 catalyzes the calcium-dependent hydrolysis of the 2-acyl groups in 3-sn-phosphoglycerides. The sequence is that of Acidic phospholipase A2 1 from Lachesis muta muta (Bushmaster).